Reading from the N-terminus, the 54-residue chain is MLYYALVFLVVALIAGVLGFGGIAGASASIAQVLFFIFLVLFVVSLVMRLMRKV.

The next 2 helical transmembrane spans lie at 5-25 (ALVF…GIAG) and 28-48 (ASIA…SLVM).

This sequence belongs to the UPF0391 family.

It localises to the cell membrane. The sequence is that of UPF0391 membrane protein pRL90066 from Rhizobium johnstonii (strain DSM 114642 / LMG 32736 / 3841) (Rhizobium leguminosarum bv. viciae).